The primary structure comprises 464 residues: Cysteine--tRNA ligase (464 aa).

C29 is a binding site for Zn(2+). The 'HIGH' region signature appears at 31 to 41 (ATVQGVPHIGH). Residues 160-180 (RLDEVQQGESTASGKRDPRDF) form a disordered region. Positions 208, 233, and 237 each coordinate Zn(2+). The short motif at 264 to 268 (KMSKS) is the 'KMSKS' region element. An ATP-binding site is contributed by K267.

It belongs to the class-I aminoacyl-tRNA synthetase family. In terms of assembly, monomer. It depends on Zn(2+) as a cofactor.

It localises to the cytoplasm. The catalysed reaction is tRNA(Cys) + L-cysteine + ATP = L-cysteinyl-tRNA(Cys) + AMP + diphosphate. The protein is Cysteine--tRNA ligase of Saccharopolyspora erythraea (strain ATCC 11635 / DSM 40517 / JCM 4748 / NBRC 13426 / NCIMB 8594 / NRRL 2338).